The following is a 172-amino-acid chain: Putative defense protein (172 aa).

A signal peptide spans 1–21 (MKLVVAAVLAMAASRWRRLSA). The 151-residue stretch at 22-172 (HGQVPSSTCA…LRQLDNAVAA (151 aa)) folds into the Reelin domain.

Belongs to the insect defense protein family. In adults, in hemolymph.

It is found in the secreted. Its function is as follows. May have antimicrobial activity. The polypeptide is Putative defense protein (Locusta migratoria (Migratory locust)).